The following is a 390-amino-acid chain: Na(+)/H(+) antiporter NhaA (390 aa).

Helical transmembrane passes span alanine 14–asparagine 34, methionine 61–valine 81, serine 97–phenylalanine 117, alanine 126–leucine 146, valine 156–phenylalanine 176, leucine 181–leucine 201, valine 221–leucine 241, alanine 256–valine 276, glycine 280–isoleucine 300, glycine 305–valine 325, isoleucine 330–leucine 350, and tryptophan 362–leucine 382.

The protein belongs to the NhaA Na(+)/H(+) (TC 2.A.33) antiporter family.

It localises to the cell inner membrane. It carries out the reaction Na(+)(in) + 2 H(+)(out) = Na(+)(out) + 2 H(+)(in). Na(+)/H(+) antiporter that extrudes sodium in exchange for external protons. The polypeptide is Na(+)/H(+) antiporter NhaA (Cronobacter sakazakii (strain ATCC BAA-894) (Enterobacter sakazakii)).